A 432-amino-acid polypeptide reads, in one-letter code: C4-dicarboxylate transport protein (432 aa).

8 consecutive transmembrane segments (helical) span residues 8–28 (ILYV…HYWP), 44–64 (LIKM…IAGM), 78–98 (LLYF…AAHL), 148–168 (GDIL…AVLG), 188–208 (IVHV…AFTI), 222–242 (LIGT…GTIA), 307–327 (IYMT…LTLM), and 355–375 (AATL…ILGI).

Belongs to the dicarboxylate/amino acid:cation symporter (DAACS) (TC 2.A.23) family.

It localises to the cell inner membrane. In terms of biological role, responsible for the transport of dicarboxylates such as succinate, fumarate, and malate from the periplasm across the membrane. The chain is C4-dicarboxylate transport protein from Cupriavidus necator (strain ATCC 17699 / DSM 428 / KCTC 22496 / NCIMB 10442 / H16 / Stanier 337) (Ralstonia eutropha).